The primary structure comprises 321 residues: NADPH-dependent codeinone reductase 1-3 (321 aa).

The NADPH site is built by T27 and D51. Active-site proton donor residues include Y56 and H119. H119 contacts substrate. NADPH contacts are provided by Q187, S214, L216, S264, and R269. Positions 300-321 (ADFLLSPTGPFKTEEEFWDEKD) are disordered.

This sequence belongs to the aldo/keto reductase family. As to expression, latex secreting cells (laticifer cells). Expressed constitutively in all organs with highest levels in capsules. Restricted to the parietal region of sieve elements adjacent or proximal to laticifers in roots, stems, leaves and carpels.

It is found in the cytoplasm. The protein localises to the cytosol. It carries out the reaction codeine + NADP(+) = codeinone + NADPH + H(+). The catalysed reaction is neopine + NADP(+) = neopinone + NADPH + H(+). The enzyme catalyses morphine + NADP(+) = morphinone + NADPH + H(+). It catalyses the reaction neomorphine + NADP(+) = neomorphinone + NADPH + H(+). It functions in the pathway alkaloid biosynthesis; morphine biosynthesis. NADPH-dependent codeinone reductase involved in biosynthesis of morphinan-type benzylisoquinoline and opiate alkaloids natural products. Reduces codeinone to codeine in the penultimate step in morphine biosynthesis. Can use morphinone, hydrocodone and hydromorphone as substrate during reductive reaction with NADPH as cofactor, and morphine and dihydrocodeine as substrate during oxidative reaction with NADP as cofactor. Converts morphinone to morphine, and neomorphinone to neomorphine. Reduces irreversibly neopinone, a spontaneous isomer of codeinone, to neopine; in planta, neopine levels are limited to low levels. In Papaver somniferum (Opium poppy), this protein is NADPH-dependent codeinone reductase 1-3.